Consider the following 385-residue polypeptide: S-adenosylmethionine synthase (385 aa).

Histidine 16 is a binding site for ATP. Aspartate 18 contacts Mg(2+). Residue glutamate 44 participates in K(+) binding. L-methionine-binding residues include glutamate 57 and glutamine 100. The tract at residues glutamine 100–arginine 110 is flexible loop. ATP contacts are provided by residues aspartate 164–lysine 166, lysine 230–phenylalanine 231, aspartate 239, arginine 245–lysine 246, alanine 262, and lysine 266. Residue aspartate 239 coordinates L-methionine. Residue lysine 270 coordinates L-methionine.

This sequence belongs to the AdoMet synthase family. In terms of assembly, homotetramer; dimer of dimers. It depends on Mg(2+) as a cofactor. K(+) serves as cofactor.

It is found in the cytoplasm. The catalysed reaction is L-methionine + ATP + H2O = S-adenosyl-L-methionine + phosphate + diphosphate. It functions in the pathway amino-acid biosynthesis; S-adenosyl-L-methionine biosynthesis; S-adenosyl-L-methionine from L-methionine: step 1/1. Catalyzes the formation of S-adenosylmethionine (AdoMet) from methionine and ATP. The overall synthetic reaction is composed of two sequential steps, AdoMet formation and the subsequent tripolyphosphate hydrolysis which occurs prior to release of AdoMet from the enzyme. This Helicobacter pylori (strain ATCC 700392 / 26695) (Campylobacter pylori) protein is S-adenosylmethionine synthase.